The chain runs to 226 residues: Ribonuclease HII (226 aa).

The region spanning 29–220 (GPVAGVDEAG…VVAAGVRLEQ (192 aa)) is the RNase H type-2 domain. Residues Asp-35, Glu-36, and Asp-129 each contribute to the a divalent metal cation site.

This sequence belongs to the RNase HII family. It depends on Mn(2+) as a cofactor. The cofactor is Mg(2+).

The protein resides in the cytoplasm. The enzyme catalyses Endonucleolytic cleavage to 5'-phosphomonoester.. Its function is as follows. Endonuclease that specifically degrades the RNA of RNA-DNA hybrids. The sequence is that of Ribonuclease HII from Rhodococcus erythropolis (strain PR4 / NBRC 100887).